Consider the following 429-residue polypeptide: Ribosomal RNA small subunit methyltransferase B (429 aa).

Residues 254–260 (CAAPGGK), Asp277, Asp303, and Asp322 each bind S-adenosyl-L-methionine. Cys375 acts as the Nucleophile in catalysis.

This sequence belongs to the class I-like SAM-binding methyltransferase superfamily. RsmB/NOP family.

It is found in the cytoplasm. It catalyses the reaction cytidine(967) in 16S rRNA + S-adenosyl-L-methionine = 5-methylcytidine(967) in 16S rRNA + S-adenosyl-L-homocysteine + H(+). Functionally, specifically methylates the cytosine at position 967 (m5C967) of 16S rRNA. The sequence is that of Ribosomal RNA small subunit methyltransferase B from Escherichia coli O127:H6 (strain E2348/69 / EPEC).